Here is a 2070-residue protein sequence, read N- to C-terminus: Multiple PDZ domain protein (2070 aa).

The L27 domain occupies 1-63 (MLEAIDKNRA…SVQQLKDQVN (63 aa)). Residues 137–224 (VFELLKPPSG…TVQLVIARGS (88 aa)) form the PDZ 1 domain. Position 230 is a phosphoserine (serine 230). PDZ domains follow at residues 257 to 337 (TIEL…ARGA) and 377 to 463 (DVEL…MRRG). Serine 483 is subject to Phosphoserine. 2 PDZ domains span residues 553-634 (VAHV…CRRT) and 700-786 (HIEL…VAKP). Serine 790 and serine 1078 each carry phosphoserine. The region spanning 1008–1089 (TINIAKGNSS…IGPDIKITYV (82 aa)) is the PDZ 6 domain. Residues 1121–1140 (DIPELPEREEGEGEESELQN) are disordered. The region spanning 1151 to 1243 (RVELWREPSK…PVVFMVQSII (93 aa)) is the PDZ 7 domain. Arginine 1170 is subject to Omega-N-methylarginine. Positions 1278-1324 (ADKAPSQSESEPEKAPLCSVPPPPPSAFAEMGSDHTQSSASKISQDV) are disordered. Positions 1311–1321 (DHTQSSASKIS) are enriched in polar residues. PDZ domains follow at residues 1350-1433 (MIEL…IRNK) and 1483-1564 (HLEL…HAEN). Residues 1567–1612 (SQAVPSAAGAASGEKKNSSQSLMVPQSGSPEPESIRNTSRSSTPAI) are disordered. The segment covering 1584-1610 (SSQSLMVPQSGSPEPESIRNTSRSSTP) has biased composition (polar residues). PDZ domains follow at residues 1629-1712 (TIEI…YRDE) and 1725-1807 (TIEL…GRIK). 2 positions are modified to phosphoserine: serine 1818 and serine 1824. PDZ domains are found at residues 1862–1948 (TVEM…VAGG) and 1987–2070 (SITL…MVLS).

Interacts with CLDN5, DLG4, GRIN1, F11R/JAM, CLDN1, NG2, CRB1, MPP4 and PALS1. Interacts with HTR2A, HTR2B, HTR2C, PLEKHA1/TAPP1, PLEKHA2/TAPP2, CXADR, SYNGAP1, CAMK2A and CAMK2B. Interacts with FAT4 (via cytoplasmic domain). Interacts with DLL1. As to quaternary structure, (Microbial infection) Interacts with human adenovirus type 9 E4-ORF1 protein. In terms of assembly, (Microbial infection) Interacts with human papillomavirus 18/HPV18 protein E6. Expressed in heart, brain, placenta, liver, skeletal muscle, kidney and pancreas.

Its subcellular location is the cell membrane. The protein localises to the apical cell membrane. The protein resides in the postsynaptic density. It is found in the cell projection. It localises to the dendrite. Its subcellular location is the cell junction. The protein localises to the tight junction. The protein resides in the synapse. It is found in the synaptosome. Member of the NMDAR signaling complex that may play a role in control of AMPAR potentiation and synaptic plasticity in excitatory synapses. Promotes clustering of HT2RC at the cell surface. The protein is Multiple PDZ domain protein (MPDZ) of Homo sapiens (Human).